We begin with the raw amino-acid sequence, 650 residues long: 1-deoxy-D-xylulose-5-phosphate synthase (650 aa).

Residues H73 and 113 to 115 (SHA) contribute to the thiamine diphosphate site. D145 contributes to the Mg(2+) binding site. Thiamine diphosphate-binding positions include 146-147 (GA), N175, Y287, and E369. Residue N175 coordinates Mg(2+).

The protein belongs to the transketolase family. DXPS subfamily. As to quaternary structure, homodimer. The cofactor is Mg(2+). Thiamine diphosphate serves as cofactor.

It carries out the reaction D-glyceraldehyde 3-phosphate + pyruvate + H(+) = 1-deoxy-D-xylulose 5-phosphate + CO2. It functions in the pathway metabolic intermediate biosynthesis; 1-deoxy-D-xylulose 5-phosphate biosynthesis; 1-deoxy-D-xylulose 5-phosphate from D-glyceraldehyde 3-phosphate and pyruvate: step 1/1. Its function is as follows. Catalyzes the acyloin condensation reaction between C atoms 2 and 3 of pyruvate and glyceraldehyde 3-phosphate to yield 1-deoxy-D-xylulose-5-phosphate (DXP). In Leifsonia xyli subsp. xyli (strain CTCB07), this protein is 1-deoxy-D-xylulose-5-phosphate synthase.